The sequence spans 1150 residues: ATP-dependent DNA helicase Q-like 4B (1150 aa).

2 disordered regions span residues Thr124–Phe143 and Cys154–Ser179. The span at Thr132 to Thr142 shows a compositional bias: low complexity. Residues Asp327–Leu361 are a coiled coil. A compositionally biased stretch (basic and acidic residues) spans Tyr416 to Ser428. A disordered region spans residues Tyr416–Trp446. Positions Ile478–Val653 constitute a Helicase ATP-binding domain. Met491 to Ser498 lines the ATP pocket. The short motif at Asp597–His600 is the DEAH box element. Positions Asp678 to Ala823 constitute a Helicase C-terminal domain. Positions Ser1029 to Thr1111 constitute an HRDC domain. Residues Asn1106 to Lys1150 form a disordered region. Positions Ser1141–Lys1150 are enriched in basic residues.

The protein belongs to the helicase family. RecQ subfamily. Mg(2+) serves as cofactor. Mn(2+) is required as a cofactor. Mostly expressed in roots, seedlings, shoots, shoot apical mersitem, flowers, and siliques.

The protein resides in the nucleus. It carries out the reaction Couples ATP hydrolysis with the unwinding of duplex DNA by translocating in the 3'-5' direction.. It catalyses the reaction ATP + H2O = ADP + phosphate + H(+). Its function is as follows. 3'-5' DNA helicase that may play a role in the repair of DNA. Required to promote but not to suppress crossovers. The chain is ATP-dependent DNA helicase Q-like 4B (RECQL4B) from Arabidopsis thaliana (Mouse-ear cress).